Here is a 645-residue protein sequence, read N- to C-terminus: Cytoplasmic dynein 1 intermediate chain 1 (645 aa).

2 stretches are compositionally biased toward basic and acidic residues: residues 1–13 (MSDK…ELER) and 20–58 (QIRE…KRRE). 2 disordered regions span residues 1 to 58 (MSDK…KRRE) and 96 to 125 (MSPS…RTLQ). Residue Ser2 is modified to N-acetylserine. The segment at 2–123 (SDKSDLKAEL…SGDLGPLTRT (122 aa)) is interaction with DCTN1. Residues Ser50 and Ser100 each carry the phosphoserine modification. The segment covering 96–107 (MSPSSKSVSTPS) has biased composition (low complexity). At Thr105 the chain carries Phosphothreonine. 3 positions are modified to phosphoserine: Ser107, Ser111, and Ser114. The interaction with DYNLT1 stretch occupies residues 147 to 163 (KLGVSKVTQVDFLPREV). A disordered region spans residues 169–221 (ETQTPLATHQSEEDEEDEEMVESKVGQDSELENQDKKQEVKEAPPRELTEEEK). Thr176 is modified (phosphothreonine). Phosphoserine is present on residues Ser179 and Ser197. Residues 189–221 (VESKVGQDSELENQDKKQEVKEAPPRELTEEEK) show a composition bias toward basic and acidic residues. WD repeat units lie at residues 285 to 334 (SKHR…TTPE), 338 to 378 (HCQS…RTPV), 387 to 428 (AHTH…TPQE), 437 to 477 (SKPV…AGIG), 482 to 527 (GHQG…PLYS), 530 to 570 (DNAD…EVPT), and 576 to 615 (EGAS…VPHN). Position 635 is a phosphoserine (Ser635).

It belongs to the dynein intermediate chain family. As to quaternary structure, homodimer. The cytoplasmic dynein 1 complex consists of two catalytic heavy chains (HCs) and a number of non-catalytic subunits presented by intermediate chains (ICs), light intermediate chains (LICs) and light chains (LCs); the composition seems to vary in respect to the IC, LIC and LC composition. The heavy chain homodimer serves as a scaffold for the probable homodimeric assembly of the respective non-catalytic subunits. The ICs and LICs bind directly to the HC dimer and the LCs assemble on the IC dimer. Interacts with DYNC1H1. Interacts with DYNLT1 and DYNLT3. Interacts with DCTN1. Interacts with MCRS1; the interaction is required for the proper distribution of centriolar satellites.

The protein resides in the cytoplasm. The protein localises to the chromosome. It is found in the centromere. It localises to the kinetochore. Its subcellular location is the cytoskeleton. The protein resides in the spindle pole. In terms of biological role, acts as one of several non-catalytic accessory components of the cytoplasmic dynein 1 complex that are thought to be involved in linking dynein to cargos and to adapter proteins that regulate dynein function. Cytoplasmic dynein 1 acts as a motor for the intracellular retrograde motility of vesicles and organelles along microtubules. The intermediate chains mediate the binding of dynein to dynactin via its 150 kDa component (p150-glued) DCTN1. May play a role in mediating the interaction of cytoplasmic dynein with membranous organelles and kinetochores. The sequence is that of Cytoplasmic dynein 1 intermediate chain 1 (DYNC1I1) from Homo sapiens (Human).